The following is an 822-amino-acid chain: Probable phosphoketolase (822 aa).

It belongs to the XFP family. Thiamine diphosphate serves as cofactor.

This is Probable phosphoketolase from Nocardia farcinica (strain IFM 10152).